We begin with the raw amino-acid sequence, 803 residues long: MEIPKLLPARGTLQGGGGGGIPAGGGRVHRGPDSPAGQVPTRRLLLLRGPQDGGPGRRREEASTASRGPGPSLLAPRTDQPSGGGGGGGDDFFLVLLDPVGGDVETAGSGQAAGPVLREEAEEGPGLQGGESGANPAGPTALGPRCLSAVPTPAPISAPGPAAAFAGTVTIHNQDLLLRFENGVLTLATPPPHAWEPGAAPAQQPGCLIAPQAGFPHAAHPGDCPELPPDLLLAEPAEPAPAPAPEEEAEGPAAALGPRGPLGSGPGVVLYLCPEAQCGQTFAKKHQLKVHLLTHSSSQGQRPFKCPLGGCGWTFTTSYKLKRHLQSHDKLRPFGCPAEGCGKSFTTVYNLKAHMKGHEQENSFKCEVCEESFPTQAKLSAHQRSHFEPERPYQCAFSGCKKTFITVSALFSHNRAHFREQELFSCSFPGCSKQYDKACRLKIHLRSHTGERPFLCDFDGCGWNFTSMSKLLRHKRKHDDDRRFMCPVEGCGKSFTRAEHLKGHSITHLGTKPFVCPVAGCCARFSARSSLYIHSKKHLQDVDTWKSRCPISSCNKLFTSKHSMKTHMVKRHKVGQDLLAQLEAANSLTPSSELTSQRQNDLSDAEIVSLFSDVPDSTSAALLDTALVNSGILTIDVASVSSTLAGHLPANNNNSVGQAVDPPSLMATSDPPQSLDTSLFFGTAATGFQQSSLNMDEVSSVSVGPLGSLDSLAMKNSSPEPQALTPSSKLTVDTDALTPSSTLCENSVSELLTPTKAEWNVHPDSDFFGQEGETQFGFPNAAGNHGSQKETDLITVTGSSFLV.

3 disordered regions span residues M1–D91, E120–T140, and A218–G260. Positions L13–G26 are enriched in gly residues. 10 C2H2-type zinc fingers span residues Y271–H295, F304–H328, F334–H358, F364–H386, Y393–H417, F424–H448, F454–H478, F484–H508, F514–H538, and S547–H572. A required for interaction with ZXDC region spans residues Y271–D577. The interval Q576–V703 is required for transcriptional activation.

It belongs to the ZXD family. In terms of assembly, self-associates. Interacts with ZXDC and CIITA. May be expressed in brain, heart, kidney, liver, lung, muscle and placenta.

The protein resides in the nucleus. Its function is as follows. Cooperates with CIITA to promote transcription of MHC class I and MHC class II genes. The sequence is that of Zinc finger X-linked protein ZXDB (ZXDB) from Homo sapiens (Human).